Here is a 307-residue protein sequence, read N- to C-terminus: Homoserine O-acetyltransferase (307 aa).

Cysteine 142 serves as the catalytic Acyl-thioester intermediate. Substrate contacts are provided by lysine 163 and serine 192. Residue histidine 235 is the Proton acceptor of the active site. The active site involves glutamate 237. Arginine 249 lines the substrate pocket.

Belongs to the MetA family.

It localises to the cytoplasm. It catalyses the reaction L-homoserine + acetyl-CoA = O-acetyl-L-homoserine + CoA. It functions in the pathway amino-acid biosynthesis; L-methionine biosynthesis via de novo pathway; O-acetyl-L-homoserine from L-homoserine: step 1/1. In terms of biological role, transfers an acetyl group from acetyl-CoA to L-homoserine, forming acetyl-L-homoserine. This is Homoserine O-acetyltransferase from Sinorhizobium fredii (strain NBRC 101917 / NGR234).